We begin with the raw amino-acid sequence, 442 residues long: tRNA-2-methylthio-N(6)-dimethylallyladenosine synthase (442 aa).

The region spanning Gln-2–Arg-117 is the MTTase N-terminal domain. [4Fe-4S] cluster-binding residues include Cys-11, Cys-47, Cys-80, Cys-157, Cys-161, and Cys-164. The Radical SAM core domain occupies Lys-143–Ala-374. The TRAM domain occupies Arg-377–Asn-442.

The protein belongs to the methylthiotransferase family. MiaB subfamily. Monomer. The cofactor is [4Fe-4S] cluster.

Its subcellular location is the cytoplasm. The catalysed reaction is N(6)-dimethylallyladenosine(37) in tRNA + (sulfur carrier)-SH + AH2 + 2 S-adenosyl-L-methionine = 2-methylsulfanyl-N(6)-dimethylallyladenosine(37) in tRNA + (sulfur carrier)-H + 5'-deoxyadenosine + L-methionine + A + S-adenosyl-L-homocysteine + 2 H(+). Functionally, catalyzes the methylthiolation of N6-(dimethylallyl)adenosine (i(6)A), leading to the formation of 2-methylthio-N6-(dimethylallyl)adenosine (ms(2)i(6)A) at position 37 in tRNAs that read codons beginning with uridine. The chain is tRNA-2-methylthio-N(6)-dimethylallyladenosine synthase from Ehrlichia chaffeensis (strain ATCC CRL-10679 / Arkansas).